Consider the following 468-residue polypeptide: 6-phospho-beta-galactosidase (468 aa).

Residues Gln-19, His-116, Asn-159, Glu-160, and Asn-297 each coordinate D-galactose 6-phosphate. Residue Glu-160 is the Proton donor of the active site. The active-site Nucleophile is Glu-375. Ser-428, Trp-429, Lys-435, and Tyr-437 together coordinate D-galactose 6-phosphate.

This sequence belongs to the glycosyl hydrolase 1 family.

It catalyses the reaction a 6-phospho-beta-D-galactoside + H2O = D-galactose 6-phosphate + an alcohol. It participates in carbohydrate metabolism; lactose degradation; D-galactose 6-phosphate and beta-D-glucose from lactose 6-phosphate: step 1/1. The protein is 6-phospho-beta-galactosidase of Streptococcus mutans serotype c (strain ATCC 700610 / UA159).